A 482-amino-acid chain; its full sequence is 3-isopropylmalate dehydratase large subunit (482 aa).

A disordered region spans residues 60 to 79 (ATPDHNVPTTRAERQGGLES). The [4Fe-4S] cluster site is built by C353, C414, and C417.

It belongs to the aconitase/IPM isomerase family. LeuC type 1 subfamily. As to quaternary structure, heterodimer of LeuC and LeuD. [4Fe-4S] cluster is required as a cofactor.

The enzyme catalyses (2R,3S)-3-isopropylmalate = (2S)-2-isopropylmalate. It functions in the pathway amino-acid biosynthesis; L-leucine biosynthesis; L-leucine from 3-methyl-2-oxobutanoate: step 2/4. Its function is as follows. Catalyzes the isomerization between 2-isopropylmalate and 3-isopropylmalate, via the formation of 2-isopropylmaleate. The sequence is that of 3-isopropylmalate dehydratase large subunit from Xanthomonas euvesicatoria pv. vesicatoria (strain 85-10) (Xanthomonas campestris pv. vesicatoria).